A 105-amino-acid polypeptide reads, in one-letter code: Large ribosomal subunit protein uL24 (105 aa).

This sequence belongs to the universal ribosomal protein uL24 family. In terms of assembly, part of the 50S ribosomal subunit.

Its function is as follows. One of two assembly initiator proteins, it binds directly to the 5'-end of the 23S rRNA, where it nucleates assembly of the 50S subunit. In terms of biological role, one of the proteins that surrounds the polypeptide exit tunnel on the outside of the subunit. The protein is Large ribosomal subunit protein uL24 of Mycobacterium avium (strain 104).